Consider the following 77-residue polypeptide: MAIFDDVKKVVVEQLSVDEDVVKMESKIIEDLGADSLDVVELVMALEEKFDVEIPDSDAEKLVKIEDVVNYIENLQK.

The Carrier domain occupies 1 to 76 (MAIFDDVKKV…DVVNYIENLQ (76 aa)). S36 is subject to O-(pantetheine 4'-phosphoryl)serine.

This sequence belongs to the acyl carrier protein (ACP) family. Post-translationally, 4'-phosphopantetheine is transferred from CoA to a specific serine of apo-ACP by AcpS. This modification is essential for activity because fatty acids are bound in thioester linkage to the sulfhydryl of the prosthetic group.

The protein resides in the cytoplasm. It functions in the pathway lipid metabolism; fatty acid biosynthesis. In terms of biological role, carrier of the growing fatty acid chain in fatty acid biosynthesis. The chain is Acyl carrier protein from Campylobacter lari (strain RM2100 / D67 / ATCC BAA-1060).